A 167-amino-acid chain; its full sequence is Phosphopantetheine adenylyltransferase (167 aa).

T9 is a substrate binding site. ATP contacts are provided by residues T9–F10 and H17. 3 residues coordinate substrate: K41, L73, and R87. Residues G88 to R90, E98, and Y123 to T129 each bind ATP.

The protein belongs to the bacterial CoaD family. In terms of assembly, homohexamer. Mg(2+) is required as a cofactor.

The protein localises to the cytoplasm. The enzyme catalyses (R)-4'-phosphopantetheine + ATP + H(+) = 3'-dephospho-CoA + diphosphate. It participates in cofactor biosynthesis; coenzyme A biosynthesis; CoA from (R)-pantothenate: step 4/5. Functionally, reversibly transfers an adenylyl group from ATP to 4'-phosphopantetheine, yielding dephospho-CoA (dPCoA) and pyrophosphate. The sequence is that of Phosphopantetheine adenylyltransferase from Bordetella avium (strain 197N).